The chain runs to 159 residues: Protein RseC (159 aa).

Topologically, residues 1-72 (MIKEWATVVS…QKVELGIAEG (72 aa)) are cytoplasmic. A helical membrane pass occupies residues 73-95 (SLLSSALLVYMSPLVGLFLIASL). The Periplasmic segment spans residues 96-98 (FQL). Residues 99–121 (LFASDVAALCGAILGGIGGFLIA) traverse the membrane as a helical segment. Residues 122 to 159 (RGYSRKFAARAEWQPIILSVALPPGLVRFETSSEDASQ) are Cytoplasmic-facing.

The protein belongs to the RseC family.

It is found in the cell inner membrane. Its function is as follows. May play a role in reduction of the SoxR iron-sulfur cluster. May work together with the RsxABCDGE complex. This Escherichia coli (strain K12) protein is Protein RseC.